We begin with the raw amino-acid sequence, 62 residues long: Small ribosomal subunit protein uS14 (62 aa).

4 residues coordinate Zn(2+): cysteine 25, cysteine 28, cysteine 41, and cysteine 44.

It belongs to the universal ribosomal protein uS14 family. Zinc-binding uS14 subfamily. As to quaternary structure, part of the 30S ribosomal subunit. Contacts proteins S3 and S10. It depends on Zn(2+) as a cofactor.

Binds 16S rRNA, required for the assembly of 30S particles and may also be responsible for determining the conformation of the 16S rRNA at the A site. The protein is Small ribosomal subunit protein uS14 of Persephonella marina (strain DSM 14350 / EX-H1).